The sequence spans 277 residues: MEEQIEPIDRVFVQLGPIAIYWYAVLILLGVAVGYFMARRESVKRGLPQETFADLLVWALPISILSARAYYVIFRWEQFADNPISVFYLREGGIAIHGALIGAVVTAIVFAKKRGLSFWKLADVAAPSILIGQAIGRWGNFVNQEVYGAEVTREFLEGMFLPDWIINQMYINGTYYQPTFLYESLWNVLGVVVLLLLRKANLRQGELFLSYVIWYSVGRFVIEGMRLDYLLIGDSLRTAQLLSIILVVAAIALWVYRRLWVKPPRYLNPDAATKQRK.

Transmembrane regions (helical) follow at residues 18–38 (IAIYWYAVLILLGVAVGYFMA), 54–74 (DLLVWALPISILSARAYYVIF), 91–111 (EGGIAIHGALIGAVVTAIVFA), and 115–135 (GLSFWKLADVAAPSILIGQAI). Arginine 137 serves as a coordination point for a 1,2-diacyl-sn-glycero-3-phospho-(1'-sn-glycerol). Transmembrane regions (helical) follow at residues 177–197 (QPTFLYESLWNVLGVVVLLLL), 205–225 (GELFLSYVIWYSVGRFVIEGM), and 236–256 (LRTAQLLSIILVVAAIALWVY).

The protein belongs to the Lgt family.

The protein localises to the cell membrane. The catalysed reaction is L-cysteinyl-[prolipoprotein] + a 1,2-diacyl-sn-glycero-3-phospho-(1'-sn-glycerol) = an S-1,2-diacyl-sn-glyceryl-L-cysteinyl-[prolipoprotein] + sn-glycerol 1-phosphate + H(+). It functions in the pathway protein modification; lipoprotein biosynthesis (diacylglyceryl transfer). Its function is as follows. Catalyzes the transfer of the diacylglyceryl group from phosphatidylglycerol to the sulfhydryl group of the N-terminal cysteine of a prolipoprotein, the first step in the formation of mature lipoproteins. In Shouchella clausii (strain KSM-K16) (Alkalihalobacillus clausii), this protein is Phosphatidylglycerol--prolipoprotein diacylglyceryl transferase.